A 726-amino-acid chain; its full sequence is Disintegrin and metalloproteinase domain-containing protein 20 (726 aa).

Residues 1–31 form the signal peptide; sequence MAVGEPLVHIRVTLLLLWFGMFLSISGHSQA. Positions 32–206 are excised as a propeptide; it reads RPSQYFTSPE…SSFVGWWTHQ (175 aa). The short motif at 171 to 178 is the Cysteine switch element; it reads MRCGLTEE. Residue cysteine 173 coordinates Zn(2+). 2 N-linked (GlcNAc...) asparagine glycosylation sites follow: asparagine 191 and asparagine 226. Residues 207–400 enclose the Peptidase M12B domain; it reads RFVELVVVVD…SGLCIQPPPY (194 aa). The Extracellular segment spans residues 207 to 693; sequence RFVELVVVVD…GLNVMGKLRY (487 aa). Disulfide bonds link cysteine 317-cysteine 394, cysteine 357-cysteine 379, and cysteine 359-cysteine 364. Histidine 342 is a binding site for Zn(2+). Glutamate 343 is a catalytic residue. Zn(2+) is bound by residues histidine 346 and histidine 352. N-linked (GlcNAc...) asparagine glycans are attached at residues asparagine 378, asparagine 438, asparagine 479, and asparagine 587. Residues 407-493 enclose the Disintegrin domain; it reads LKYCGNLVVE…QCPDDVYVQD (87 aa). The cysteines at positions 465 and 485 are disulfide-linked. Cystine bridges form between cysteine 635-cysteine 646, cysteine 640-cysteine 652, and cysteine 654-cysteine 663. The region spanning 635-663 is the EGF-like domain; sequence CQPKTCNMRGICNNKQHCHCNHEWAPPYC. The helical transmembrane segment at 694–714 threads the bilayer; the sequence is LSLLCLLPLVAFLLFCLHVLF. The Cytoplasmic portion of the chain corresponds to 715 to 726; that stretch reads KKRTKSKEDEEG.

Zn(2+) is required as a cofactor. Has no obvious cleavage site for furin endopeptidase, suggesting that the proteolytic processing is regulated. As to expression, testis specific.

The protein localises to the membrane. Its function is as follows. May be involved in sperm maturation and/or fertilization. This Homo sapiens (Human) protein is Disintegrin and metalloproteinase domain-containing protein 20 (ADAM20).